Here is a 103-residue protein sequence, read N- to C-terminus: Conantokin-Br (103 aa).

A signal peptide spans 1–21 (MQLYTYLYLLVPLVTFHLILG). The propeptide occupies 22–79 (TGTLDHGGALTERRSTDATALKPEPVLQKSAARSTDDNGKDRLTQMKRILKKRGKNAR). The segment at 34–64 (RRSTDATALKPEPVLQKSAARSTDDNGKDRL) is disordered. Over residues 55–64 (STDDNGKDRL) the composition is skewed to basic and acidic residues. A 4-carboxyglutamate mark is found at Glu-82, Glu-83, Glu-89, and Glu-93. Residues Glu-89 and Glu-93 each coordinate a divalent metal cation.

Belongs to the conotoxin B superfamily. The cofactor is Ca(2+). Requires Mg(2+) as cofactor. In terms of tissue distribution, expressed by the venom duct.

The protein localises to the secreted. Conantokins inhibit N-methyl-D-aspartate (NMDA) receptors. This toxin inhibits NR2 subunits N-methyl-D-aspartate (NMDA) receptor-mediated calcium influx in central nervous system neurons in the following order of preference: NR2B/GRIN2B (IC(50)=0.14 uM), NR2D/GRIN2D (IC(50)=0.31 uM), NR2A/GRIN2A (IC(50)=0.68 uM) and NR2C/GRIN2A (IC(50)=4.9 uM), when tested on rat receptors. The protein is Conantokin-Br of Conus sulcatus (Sulcate cone).